The sequence spans 448 residues: Putative F-box/LRR-repeat protein At5g25860 (448 aa).

Residues 11–58 (RDAVNCLPDEILAKILSYLPTKRAVSTSLISKRWRNLFALMIQLFESQ) enclose the F-box domain. 5 LRR repeats span residues 82 to 106 (QESF…SILC), 185 to 214 (FLHA…FLHD), 215 to 240 (LRGY…TVHF), 310 to 341 (TLSL…YFES), and 342 to 367 (NEKE…VLKG).

In Arabidopsis thaliana (Mouse-ear cress), this protein is Putative F-box/LRR-repeat protein At5g25860.